A 95-amino-acid chain; its full sequence is Integration host factor subunit beta (95 aa).

The protein belongs to the bacterial histone-like protein family. Heterodimer of an alpha and a beta chain.

Its function is as follows. This protein is one of the two subunits of integration host factor, a specific DNA-binding protein that functions in genetic recombination as well as in transcriptional and translational control. In Colwellia psychrerythraea (strain 34H / ATCC BAA-681) (Vibrio psychroerythus), this protein is Integration host factor subunit beta.